Reading from the N-terminus, the 477-residue chain is Salivary plasminogen activator alpha 1 (477 aa).

The signal sequence occupies residues 1–36; it reads MVNTMKTKLLCVLLLCGAVFSLPRQETYRQLARGSR. A Fibronectin type-I domain is found at 40 to 82; sequence VACKDEITQMTYRRQESWLRPEVRSKRVEHCQCDRGQARCHTV. Cystine bridges form between Cys42-Cys72, Cys70-Cys79, Cys87-Cys98, Cys92-Cys109, Cys111-Cys120, Cys128-Cys209, Cys149-Cys191, Cys180-Cys204, Cys214-Cys345, Cys257-Cys273, Cys265-Cys334, Cys359-Cys434, Cys391-Cys407, and Cys424-Cys452. The region spanning 83-121 is the EGF-like domain; that stretch reads PVNSCSEPRCFNGGTCWQAVYFSDFVCQCPAGYTGKRCE. The Kringle domain occupies 128–209; it reads CYEGQGVTYR…TSESCSVPVC (82 aa). A glycan (N-linked (GlcNAc...) asparagine) is linked at Asn153. The Peptidase S1 domain maps to 226–476; sequence STGGLFTDIT…YLGWIRDNMH (251 aa). Residues His272 and Asp321 each act as charge relay system in the active site. N-linked (GlcNAc...) asparagine glycosylation is present at Asn398. Ser428 serves as the catalytic Charge relay system.

The protein belongs to the peptidase S1 family. Monomer.

It localises to the secreted. The enzyme catalyses Specific cleavage of Arg-|-Val bond in plasminogen to form plasmin.. With respect to regulation, activity toward plasminogen is stimulated in the presence of fibrin I. Its function is as follows. Probably essential to support the feeding habits of this exclusively haematophagous animal. Potent thrombolytic agent. The chain is Salivary plasminogen activator alpha 1 from Desmodus rotundus (Vampire bat).